The primary structure comprises 361 residues: Ankyrin repeat domain-containing protein 16 (361 aa).

9 ANK repeats span residues 36–66 (AGDT…DIEA), 70–99 (DYKR…AVDC), 103–132 (ADWT…NPLL), 136–165 (DGWN…GAWK), 170–200 (IRRT…EPDY), 204–234 (CGVT…CLSA), 238–268 (LGAQ…DVDV), 273–302 (THLT…DINS), and 306–335 (KNRS…KDSE).

In terms of assembly, interacts with AARS; the interaction is direct.

The protein resides in the cytoplasm. Its subcellular location is the nucleus. In terms of biological role, required to prevent the misactivation of serine (Ser) with tRNA(Ala) by promoting the hydrolysis of Ser-mischarged tRNA(Ala), thereby playing a role in translational fidelity. Binds directly to the catalytic domain of AARS/AlaRS and captures Ser that is misactivated by AARS/AlaRS, preventing the charging of Ser adenylates to tRNA(Ala) and precluding Ser misincorporation in nascent peptides. In Homo sapiens (Human), this protein is Ankyrin repeat domain-containing protein 16.